The following is a 179-amino-acid chain: Large ribosomal subunit protein uL5 (179 aa).

The protein belongs to the universal ribosomal protein uL5 family. In terms of assembly, part of the 50S ribosomal subunit; part of the 5S rRNA/L5/L18/L25 subcomplex. Contacts the 5S rRNA and the P site tRNA. Forms a bridge to the 30S subunit in the 70S ribosome.

Functionally, this is one of the proteins that bind and probably mediate the attachment of the 5S RNA into the large ribosomal subunit, where it forms part of the central protuberance. In the 70S ribosome it contacts protein S13 of the 30S subunit (bridge B1b), connecting the 2 subunits; this bridge is implicated in subunit movement. Contacts the P site tRNA; the 5S rRNA and some of its associated proteins might help stabilize positioning of ribosome-bound tRNAs. This chain is Large ribosomal subunit protein uL5, found in Shewanella baltica (strain OS223).